Here is a 594-residue protein sequence, read N- to C-terminus: Aspartate--tRNA(Asp/Asn) ligase (594 aa).

Residue Glu175 coordinates L-aspartate. Positions 199–202 (QQFK) are aspartate. The L-aspartate site is built by Arg221 and His455. Residue 221 to 223 (RDE) coordinates ATP. Glu488 contributes to the ATP binding site. Arg495 contacts L-aspartate. 540–543 (GIDR) contributes to the ATP binding site.

It belongs to the class-II aminoacyl-tRNA synthetase family. Type 1 subfamily. As to quaternary structure, homodimer.

The protein localises to the cytoplasm. The enzyme catalyses tRNA(Asx) + L-aspartate + ATP = L-aspartyl-tRNA(Asx) + AMP + diphosphate. Functionally, aspartyl-tRNA synthetase with relaxed tRNA specificity since it is able to aspartylate not only its cognate tRNA(Asp) but also tRNA(Asn). Reaction proceeds in two steps: L-aspartate is first activated by ATP to form Asp-AMP and then transferred to the acceptor end of tRNA(Asp/Asn). This Ruegeria sp. (strain TM1040) (Silicibacter sp.) protein is Aspartate--tRNA(Asp/Asn) ligase.